A 502-amino-acid polypeptide reads, in one-letter code: Glycerol kinase (502 aa).

Thr-14 lines the ADP pocket. Thr-14, Thr-15, and Ser-16 together coordinate ATP. Thr-14 contacts sn-glycerol 3-phosphate. Arg-18 lines the ADP pocket. Residues Arg-84, Glu-85, and Tyr-136 each contribute to the sn-glycerol 3-phosphate site. Arg-84, Glu-85, and Tyr-136 together coordinate glycerol. His-232 bears the Phosphohistidine; by HPr mark. Asp-246 contacts sn-glycerol 3-phosphate. Residues Asp-246 and Gln-247 each coordinate glycerol. Positions 268 and 311 each coordinate ADP. ATP is bound by residues Thr-268, Gly-311, Gln-315, and Gly-412. 2 residues coordinate ADP: Gly-412 and Asn-416.

This sequence belongs to the FGGY kinase family. In terms of assembly, homotetramer and homodimer (in equilibrium). In terms of processing, the phosphoenolpyruvate-dependent sugar phosphotransferase system (PTS), including enzyme I, and histidine-containing protein (HPr) are required for the phosphorylation, which leads to the activation of the enzyme.

It carries out the reaction glycerol + ATP = sn-glycerol 3-phosphate + ADP + H(+). It participates in polyol metabolism; glycerol degradation via glycerol kinase pathway; sn-glycerol 3-phosphate from glycerol: step 1/1. Activated by phosphorylation and inhibited by fructose 1,6-bisphosphate (FBP). In terms of biological role, key enzyme in the regulation of glycerol uptake and metabolism. Catalyzes the phosphorylation of glycerol to yield sn-glycerol 3-phosphate. This is Glycerol kinase from Streptococcus pneumoniae (strain P1031).